We begin with the raw amino-acid sequence, 262 residues long: Conserved oligomeric Golgi complex subunit 2 (262 aa).

In terms of assembly, component of the conserved oligomeric Golgi (COG or Sec34/Sec35) complex which consists of eight different proteins COG1-COG8. The COG complex interacts with the Rab GTPase YPT1, the Glogi SNAREs GOS1, SEC22, SED5, VTI1 and YKT6 and the COPI coatomer subunit gamma SEC21.

It is found in the golgi apparatus membrane. Functionally, acts as a component of the peripheral membrane COG complex that is involved in intra-Golgi protein trafficking. COG is located at the cis-Golgi, and regulates tethering of retrograde intra-Golgi vesicles and possibly a number of other membrane trafficking events. COG2 is required for ER to Golgi vesicle docking. Not essential for viability. This is Conserved oligomeric Golgi complex subunit 2 (COG2) from Saccharomyces cerevisiae (strain ATCC 204508 / S288c) (Baker's yeast).